Reading from the N-terminus, the 855-residue chain is DNA mismatch repair protein MutS (855 aa).

Residue Gly-616–Ser-623 coordinates ATP.

The protein belongs to the DNA mismatch repair MutS family.

Functionally, this protein is involved in the repair of mismatches in DNA. It is possible that it carries out the mismatch recognition step. This protein has a weak ATPase activity. The polypeptide is DNA mismatch repair protein MutS (Salmonella schwarzengrund (strain CVM19633)).